The sequence spans 260 residues: Acetylglutamate kinase (260 aa).

Substrate contacts are provided by residues 46-47 (GG), Arg68, and Asn160.

This sequence belongs to the acetylglutamate kinase family. ArgB subfamily.

It is found in the cytoplasm. It carries out the reaction N-acetyl-L-glutamate + ATP = N-acetyl-L-glutamyl 5-phosphate + ADP. Its pathway is amino-acid biosynthesis; L-arginine biosynthesis; N(2)-acetyl-L-ornithine from L-glutamate: step 2/4. Catalyzes the ATP-dependent phosphorylation of N-acetyl-L-glutamate. The chain is Acetylglutamate kinase from Shewanella denitrificans (strain OS217 / ATCC BAA-1090 / DSM 15013).